A 181-amino-acid polypeptide reads, in one-letter code: MIAGYIMAAENQTLNQWTINQLGITRGDSILEVGFGPGYCMQQMLKREKDVHLHGIDVSEAMLKLAARRVKPKGVRLIQGSIETFPLPASFYDKVISVNNYTIWNDQTKGIKQIYRALKPGGKAAITMQPREADASPEKTKSFGRQMIADFKAAGFEDIDIQFKNIKPELSVCATAKKPAT.

Belongs to the methyltransferase superfamily.

This is an uncharacterized protein from Bacillus subtilis (strain 168).